The primary structure comprises 881 residues: Nitrate reductase [NADH] 1 (881 aa).

Residues 1–46 are disordered; sequence MAASVEHRPFTSHQHGVVRSFKSYPDVPRPKKLPLPQPLSDSTNDN. Cys167 contributes to the Mo-molybdopterin binding site. In terms of domain architecture, Cytochrome b5 heme-binding spans 515–590; sequence TKSYSLSEVR…LEDYRIGELM (76 aa). Residues His550 and His573 each contribute to the heme site. The region spanning 625-737 is the FAD-binding FR-type domain; it reads REKIPCKLLS…KGPLGHIEYT (113 aa). FAD-binding positions include 677-680, 694-698, Phe699, Phe706, 711-713, and Thr764; these read RAYT, VVKVY, and IMS.

It belongs to the nitrate reductase family. As to quaternary structure, homodimer. FAD is required as a cofactor. Heme serves as cofactor. Requires Mo-molybdopterin as cofactor.

It carries out the reaction nitrite + NAD(+) + H2O = nitrate + NADH + H(+). In terms of biological role, nitrate reductase is a key enzyme involved in the first step of nitrate assimilation in plants, fungi and bacteria. The polypeptide is Nitrate reductase [NADH] 1 (NIA1) (Phaseolus vulgaris (Kidney bean)).